Here is a 739-residue protein sequence, read N- to C-terminus: MKKILAFLLTVALVAVVAIPQAVVSFAADFNYGEALQKAIMFYEFQRSGKLPENKRNNWRGDSALNDGADNGLDLTGGWYDAGDHVKFNLPMAYAVTMLAWSVYESRDAYVQSGQLPYILDNIKWATDYFIKCHPSPNVYYYQVGDGALDHSWWGPAEVMQMPRPSFKVDLTNPGSTVVAETAAAMAASSIVFKPTDPEYAATLLRHAKELFTFADTTRSDAGYRAAEGYYSSHSGFYDELTWASIWLYLATGDQSYLDKAESYEPHWERERGTTLISYSWAHCWDNKLYGSLLLLAKITGKSYYKQCIENHLDYWTVGFNGSRVQYTPKGLAYLDRWGSLRYATTQAFLASVYADWSGCDPAKAAVYKEFAKKQVDYALGSTGRSFVVGFGKNPPRNPHHRTAHSSWSALMTEPAECRHILVGALVGGPDGSDSYVDRLDDYQCNEVANDYNAGFVGALAKMYEKYGGEPIPNFVAFETPGEEFYVEAAVNAAGPGFVNIKASIINKSGWPARGSDKLSAKYFVDISEAVAKGITLDQITVQSTTNGGAKVSQLLPWDPDNHIYYVNIDFTGINIFPGGINEYKRDVYFTITAPYGEGNWDNTNDFSFQGLEQGFTSKKTEYIPLYDGNVRVWGKVPDGGSEPDPTPTITVGPTPSVTPTSVPGIMLGDVNFDGRINSTDYSRLKRYVIKSLEFTDPEEHQKFIAAADVDGNGRINSTDLYVLNRYILKLIEKFPAEQ.

The first 27 residues, 1 to 27 (MKKILAFLLTVALVAVVAIPQAVVSFA), serve as a signal peptide directing secretion. The interval 28-470 (ADFNYGEALQ…AKMYEKYGGE (443 aa)) is catalytic. Aspartate 84 (nucleophile) is an active-site residue. Catalysis depends on residues histidine 400, aspartate 438, and glutamate 447. In terms of domain architecture, CBM3 spans 480–639 (TPGEEFYVEA…NVRVWGKVPD (160 aa)). The region spanning 664-737 (PGIMLGDVNF…ILKLIEKFPA (74 aa)) is the Dockerin domain.

Belongs to the glycosyl hydrolase 9 (cellulase E) family. Ca(2+) serves as cofactor.

It catalyses the reaction Endohydrolysis of (1-&gt;4)-beta-D-glucosidic linkages in cellulose, lichenin and cereal beta-D-glucans.. In terms of biological role, this enzyme catalyzes the endohydrolysis of 1,4-beta-glucosidic linkages in cellulose, lichenin and cereal beta-D-glucans. This chain is Endoglucanase F (celF), found in Acetivibrio thermocellus (strain ATCC 27405 / DSM 1237 / JCM 9322 / NBRC 103400 / NCIMB 10682 / NRRL B-4536 / VPI 7372) (Clostridium thermocellum).